We begin with the raw amino-acid sequence, 604 residues long: Siderophore iron transporter mirB (604 aa).

The segment at 1–61 (MTIGSKFSLL…DNSSDEALPS (61 aa)) is disordered. 14 helical membrane-spanning segments follow: residues 73–95 (AVTLVWSKWSLVAVFCLLWLVTL), 115–137 (FQSHSLLTVINIVSSAMVSALYI), 149–168 (AEGWLVMVGLSTLGLIMMAA), 178–200 (ADVFYSVGFAGMNYILCVLAADI), 207–224 (GIAFAFTSSPYMITAFAG), 237–259 (WRWGFGAFAIIFPFVASPVYFVL), 289–311 (YFFAFDIPGVILLAGGLTVFLLP), 326–343 (YIIAMIVTGFVVMVLFVL), 363–385 (TVLGACLIDATYQMSYYCWNSYF), 400–422 (AGYVGSTFQVVSGVLLFMVGFAI), 427–449 (YFRWLLFIGVPLYIFAQGLMIHF), 454–476 (QYIGYIVMCEIFISIGGSIFVLL), 489–511 (YVAAALAVLFISGGIGGAVGNAI), and 566–588 (AQARMLAAGTGLMALMFIWMFMV).

This sequence belongs to the major facilitator superfamily.

The protein localises to the membrane. Its function is as follows. Involved in the transport of siderophore triacestylfusarinine C and so has a role in iron homeostasis. The sequence is that of Siderophore iron transporter mirB (mirB) from Emericella nidulans (strain FGSC A4 / ATCC 38163 / CBS 112.46 / NRRL 194 / M139) (Aspergillus nidulans).